The chain runs to 227 residues: Thymidylate kinase (227 aa).

Residue Gly-16–Thr-23 coordinates ATP.

It belongs to the thymidylate kinase family.

The catalysed reaction is dTMP + ATP = dTDP + ADP. In terms of biological role, phosphorylation of dTMP to form dTDP in both de novo and salvage pathways of dTTP synthesis. The sequence is that of Thymidylate kinase from Xanthomonas campestris pv. campestris (strain 8004).